We begin with the raw amino-acid sequence, 183 residues long: Inner membrane-spanning protein YciB (183 aa).

The next 5 helical transmembrane spans lie at 22 to 42 (IYAA…ITYL), 50 to 70 (MHLA…FFHD), 72 to 92 (AFIK…LIAS), 118 to 138 (VTWY…YIAF), and 148 to 168 (FKVF…VVYL).

It belongs to the YciB family.

It localises to the cell inner membrane. Its function is as follows. Plays a role in cell envelope biogenesis, maintenance of cell envelope integrity and membrane homeostasis. In Shewanella frigidimarina (strain NCIMB 400), this protein is Inner membrane-spanning protein YciB.